Reading from the N-terminus, the 636-residue chain is Leucine-rich repeat and fibronectin type-III domain-containing protein 4 (636 aa).

A signal peptide spans 1–16 (MAPPLLLLLLASGAAA). The region spanning 17–48 (CPLPCVCQNLSESLSTLCAHRGLLFVPPNVDR) is the LRRNT domain. At 17 to 518 (CPLPCVCQNL…LQAHVLGGTL (502 aa)) the chain is on the extracellular side. Asparagine 25 carries N-linked (GlcNAc...) asparagine glycosylation. LRR repeat units lie at residues 49–70 (RTVE…DFRN), 73–94 (GLVD…SFGD), 97–118 (SLRS…SLRG), 121–142 (NLQH…AFDD), 146–169 (SLED…GSMP), 170–191 (ALHT…VFAQ), and 194–215 (QLSR…PLFS). The LRRCT domain occupies 234 to 280 (NPLHCNCELLWLRRLARPDDLETCASPPTLAGRYFWAVPEGEFSCEP). The Ig-like domain occupies 281–367 (PLIARHTQRL…GEATARVELR (87 aa)). A disulfide bond links cysteine 302 and cysteine 351. Asparagine 333 carries N-linked (GlcNAc...) asparagine glycosylation. Positions 405-502 (SEPAVQVTEV…GCAHFSTLPA (98 aa)) constitute a Fibronectin type-III domain. A helical transmembrane segment spans residues 519-539 (TVAVGGVLVAALLVFTVALLV). Residues 540–636 (RGRGAGNGRL…SAERLEESVV (97 aa)) lie on the Cytoplasmic side of the membrane. The segment at 556–585 (VQSQTNGGTSPMPKSHPPRSPPPRPQRSCS) is disordered. A compositionally biased stretch (pro residues) spans 569 to 580 (KSHPPRSPPPRP). Residues serine 585 and serine 627 each carry the phosphoserine modification. Residues 633-636 (ESVV) carry the PDZ-binding motif.

The protein belongs to the LRFN family. In terms of assembly, forms heteromeric complexes with LRFN1 and LRFN2. Can form heteromeric complexes with LRFN3 and LRFN5. Unable to form homophilic interactions across cell junctions. Interacts with DLG1, DLG2, DLG3 and DLG4. Post-translationally, glycosylated.

Its subcellular location is the membrane. In terms of biological role, promotes neurite outgrowth in hippocampal neurons. May play a role in redistributing DLG4 to the cell periphery. This is Leucine-rich repeat and fibronectin type-III domain-containing protein 4 (Lrfn4) from Rattus norvegicus (Rat).